A 523-amino-acid polypeptide reads, in one-letter code: UDP-glucuronosyltransferase 3A2 (523 aa).

A signal peptide spans 1 to 22; it reads MAAHRRWLLMSFLFLEVILLEA. Over 23 to 487 the chain is Extracellular; sequence AKILTISTLS…QPWHEQYMLD (465 aa). A glycan (N-linked (GlcNAc...) asparagine) is linked at Asn-52. The chain crosses the membrane as a helical span at residues 488 to 508; the sequence is VFLFLLGLMLGTLWLSVKVLV. Residues 509-523 are Cytoplasmic-facing; it reads AVTRYLSIATKVKEA.

It belongs to the UDP-glycosyltransferase family. As to expression, highly expressed in kidney, while it is expressed at low levels in liver. Not detected in other tissues examined.

Its subcellular location is the membrane. The catalysed reaction is glucuronate acceptor + UDP-alpha-D-glucuronate = acceptor beta-D-glucuronoside + UDP + H(+). UDP-glucuronosyltransferases catalyze phase II biotransformation reactions in which lipophilic substrates are conjugated with glucuronic acid to increase water solubility and enhance excretion. They are of major importance in the conjugation and subsequent elimination of potentially toxic xenobiotics and endogenous compounds. In Mus musculus (Mouse), this protein is UDP-glucuronosyltransferase 3A2 (Ugt3a2).